We begin with the raw amino-acid sequence, 382 residues long: Lipid-A-disaccharide synthase (382 aa).

Belongs to the LpxB family.

It catalyses the reaction 2-N,3-O-bis[(3R)-3-hydroxytetradecanoyl]-alpha-D-glucosaminyl 1-phosphate + UDP-2-N,3-O-bis[(3R)-3-hydroxytetradecanoyl]-alpha-D-glucosamine = lipid A disaccharide (E. coli) + UDP + H(+). The enzyme catalyses a lipid X + a UDP-2-N,3-O-bis[(3R)-3-hydroxyacyl]-alpha-D-glucosamine = a lipid A disaccharide + UDP + H(+). The protein operates within glycolipid biosynthesis; lipid IV(A) biosynthesis; lipid IV(A) from (3R)-3-hydroxytetradecanoyl-[acyl-carrier-protein] and UDP-N-acetyl-alpha-D-glucosamine: step 5/6. Condensation of UDP-2,3-diacylglucosamine and 2,3-diacylglucosamine-1-phosphate to form lipid A disaccharide, a precursor of lipid A, a phosphorylated glycolipid that anchors the lipopolysaccharide to the outer membrane of the cell. The chain is Lipid-A-disaccharide synthase from Shigella dysenteriae serotype 1 (strain Sd197).